Consider the following 691-residue polypeptide: Penicillin-binding protein 2D (691 aa).

Over 1 to 19 (MDAMTNKRLRLTLKTVRAF) the chain is Cytoplasmic. Residues 20-40 (IFLGAFAALAAAAVFMTVILI) traverse the membrane as a helical; Signal-anchor for type II membrane protein segment. Residues 41 to 691 (AKYQGAPSVQ…WWDKWLGRHH (651 aa)) lie on the Extracellular side of the membrane. The segment at 55–223 (TILYASDGSK…PSGYSPYVNE (169 aa)) is transglycosylase. The Proton donor; for transglycosylase activity role is filled by Glu94. Residues 327–605 (VGFSAIDPRT…AKTIWADFME (279 aa)) form a transpeptidase region. Ser365 (acyl-ester intermediate; for transpeptidase activity) is an active-site residue. The segment at 663–691 (AKQTKDRLPSKEKPASEKKWWDKWLGRHH) is disordered. Basic and acidic residues predominate over residues 664–691 (KQTKDRLPSKEKPASEKKWWDKWLGRHH).

This sequence in the N-terminal section; belongs to the glycosyltransferase 51 family. It in the C-terminal section; belongs to the transpeptidase family.

The protein localises to the cell membrane. It carries out the reaction [GlcNAc-(1-&gt;4)-Mur2Ac(oyl-L-Ala-gamma-D-Glu-L-Lys-D-Ala-D-Ala)](n)-di-trans,octa-cis-undecaprenyl diphosphate + beta-D-GlcNAc-(1-&gt;4)-Mur2Ac(oyl-L-Ala-gamma-D-Glu-L-Lys-D-Ala-D-Ala)-di-trans,octa-cis-undecaprenyl diphosphate = [GlcNAc-(1-&gt;4)-Mur2Ac(oyl-L-Ala-gamma-D-Glu-L-Lys-D-Ala-D-Ala)](n+1)-di-trans,octa-cis-undecaprenyl diphosphate + di-trans,octa-cis-undecaprenyl diphosphate + H(+). The catalysed reaction is Preferential cleavage: (Ac)2-L-Lys-D-Ala-|-D-Ala. Also transpeptidation of peptidyl-alanyl moieties that are N-acyl substituents of D-alanine.. It functions in the pathway cell wall biogenesis; peptidoglycan biosynthesis. Its function is as follows. Involved in the polymerization and cross-linking of spore peptidoglycan. May be required for synthesis of the spore germ cell wall, the first layer of peptidoglycan synthesized on the surface of the inner forespore membrane. In Bacillus subtilis (strain 168), this protein is Penicillin-binding protein 2D (pbpG).